We begin with the raw amino-acid sequence, 621 residues long: UvrABC system protein C (621 aa).

The GIY-YIG domain maps to Glu13–Val92. Residues Asp205–Ile240 enclose the UVR domain.

This sequence belongs to the UvrC family. As to quaternary structure, interacts with UvrB in an incision complex.

It is found in the cytoplasm. In terms of biological role, the UvrABC repair system catalyzes the recognition and processing of DNA lesions. UvrC both incises the 5' and 3' sides of the lesion. The N-terminal half is responsible for the 3' incision and the C-terminal half is responsible for the 5' incision. The chain is UvrABC system protein C from Alkaliphilus oremlandii (strain OhILAs) (Clostridium oremlandii (strain OhILAs)).